The following is a 224-amino-acid chain: Ribose-5-phosphate isomerase A (224 aa).

Substrate contacts are provided by residues 32–35, 85–88, and 98–101; these read TGST, DGAD, and KGGG. Glu107 functions as the Proton acceptor in the catalytic mechanism. Substrate is bound at residue Lys125.

It belongs to the ribose 5-phosphate isomerase family. In terms of assembly, homodimer.

The enzyme catalyses aldehydo-D-ribose 5-phosphate = D-ribulose 5-phosphate. It participates in carbohydrate degradation; pentose phosphate pathway; D-ribose 5-phosphate from D-ribulose 5-phosphate (non-oxidative stage): step 1/1. Catalyzes the reversible conversion of ribose-5-phosphate to ribulose 5-phosphate. This Pseudomonas entomophila (strain L48) protein is Ribose-5-phosphate isomerase A.